A 306-amino-acid chain; its full sequence is Aspartate carbamoyltransferase catalytic subunit (306 aa).

Positions 55 and 56 each coordinate carbamoyl phosphate. Lys-84 lines the L-aspartate pocket. The carbamoyl phosphate site is built by Arg-105, His-133, and Gln-136. Arg-166 and Arg-227 together coordinate L-aspartate. Carbamoyl phosphate is bound by residues Leu-265 and Pro-266.

The protein belongs to the aspartate/ornithine carbamoyltransferase superfamily. ATCase family. As to quaternary structure, heterododecamer (2C3:3R2) of six catalytic PyrB chains organized as two trimers (C3), and six regulatory PyrI chains organized as three dimers (R2).

It carries out the reaction carbamoyl phosphate + L-aspartate = N-carbamoyl-L-aspartate + phosphate + H(+). It participates in pyrimidine metabolism; UMP biosynthesis via de novo pathway; (S)-dihydroorotate from bicarbonate: step 2/3. Catalyzes the condensation of carbamoyl phosphate and aspartate to form carbamoyl aspartate and inorganic phosphate, the committed step in the de novo pyrimidine nucleotide biosynthesis pathway. The sequence is that of Aspartate carbamoyltransferase catalytic subunit from Aeromonas hydrophila subsp. hydrophila (strain ATCC 7966 / DSM 30187 / BCRC 13018 / CCUG 14551 / JCM 1027 / KCTC 2358 / NCIMB 9240 / NCTC 8049).